The chain runs to 556 residues: Arginine--tRNA ligase (556 aa).

The 'HIGH' region signature appears at 132 to 142 (ANPTGDLHLGH).

This sequence belongs to the class-I aminoacyl-tRNA synthetase family. In terms of assembly, monomer.

The protein resides in the cytoplasm. It carries out the reaction tRNA(Arg) + L-arginine + ATP = L-arginyl-tRNA(Arg) + AMP + diphosphate. The chain is Arginine--tRNA ligase from Bacillus cereus (strain ATCC 14579 / DSM 31 / CCUG 7414 / JCM 2152 / NBRC 15305 / NCIMB 9373 / NCTC 2599 / NRRL B-3711).